The following is a 700-amino-acid chain: MKVREILVTSALPYANGDIHLGHLVEYIQTDIWVRSMKAQGHKVTYVCADDAHGTAIMLKAEDNGVTPEQQIANVQAAHEADFAKFLINFDNYHSTHSEENREFSELIYRRLRDAGHISTRDVEQLFDPEKQLFLADRFVKGTCPECAATDQYGDNCEVCGTTYDATELKNPYSTLSNATPILKTSKHYFFDLPEFEQFLKDWTRSDNRLQTSVANKLQEWFDAGLTSWDISRDAPYFGFQIPDTPSDEPDKYFYVWLDAPVGYMASFQNLCDKRAGTEEALDFDHYWAQENEHKTEVYHFIGKDIVYFHALFWPAMLAGSELRTPTGVFAHGFLMVNGEKMSKSRGTFIKADTYAEHLHPEYLRYYFASKLSDKVEDINLDLEDFMQKVNSDLVGKVVNIASRSAGFLVKKYDGMLTDVCAEPSLLEDITKTGDEIAAAYENREFSRAMRLIMQCADKANEYIDDKKPWALAKVEGAEQEVQDVCSVAINIFRQLMVYLAPVLPELTANAKEFLNIDDLSFASRNEWLLGHQINKFKPLMQRIEEKDIAAMVEDSKASLTQVGAPTASQDDKAAAKNTSPAAMPSSTEQADYIGIEDFAKVEMKVAHVIACNHVEGADKLLQFTLDVGEAQPRNVFSGIRKFYEPEQLQGKKVICVTNLAPRKMKFGISEGMVLSSGDPKTGLVVITLPDEAVIGDSLA.

A 'HIGH' region motif is present at residues 13–23 (PYANGDIHLGH). 4 residues coordinate Zn(2+): Cys-144, Cys-147, Cys-157, and Cys-160. The 'KMSKS' region motif lies at 341–345 (KMSKS). Position 344 (Lys-344) interacts with ATP. Positions 562–587 (QVGAPTASQDDKAAAKNTSPAAMPSS) are disordered. A compositionally biased stretch (polar residues) spans 577-587 (KNTSPAAMPSS). The tRNA-binding domain occupies 598 to 700 (DFAKVEMKVA…DEAVIGDSLA (103 aa)).

The protein belongs to the class-I aminoacyl-tRNA synthetase family. MetG type 1 subfamily. Homodimer. Zn(2+) serves as cofactor.

The protein resides in the cytoplasm. It carries out the reaction tRNA(Met) + L-methionine + ATP = L-methionyl-tRNA(Met) + AMP + diphosphate. Functionally, is required not only for elongation of protein synthesis but also for the initiation of all mRNA translation through initiator tRNA(fMet) aminoacylation. This chain is Methionine--tRNA ligase, found in Psychrobacter cryohalolentis (strain ATCC BAA-1226 / DSM 17306 / VKM B-2378 / K5).